Here is a 213-residue protein sequence, read N- to C-terminus: Uracil phosphoribosyltransferase (213 aa).

5-phospho-alpha-D-ribose 1-diphosphate-binding positions include Arg78, Arg103, and Asp131 to Thr139. Uracil is bound by residues Ile197 and Gly202–Ala204. Asp203 serves as a coordination point for 5-phospho-alpha-D-ribose 1-diphosphate.

The protein belongs to the UPRTase family. Mg(2+) is required as a cofactor.

It catalyses the reaction UMP + diphosphate = 5-phospho-alpha-D-ribose 1-diphosphate + uracil. It functions in the pathway pyrimidine metabolism; UMP biosynthesis via salvage pathway; UMP from uracil: step 1/1. Its activity is regulated as follows. Allosterically activated by GTP. Catalyzes the conversion of uracil and 5-phospho-alpha-D-ribose 1-diphosphate (PRPP) to UMP and diphosphate. This chain is Uracil phosphoribosyltransferase, found in Bifidobacterium longum (strain DJO10A).